A 143-amino-acid chain; its full sequence is 1,4-dihydroxy-2-naphthoyl-CoA hydrolase (143 aa).

Aspartate 14 is a catalytic residue.

Belongs to the 4-hydroxybenzoyl-CoA thioesterase family. DHNA-CoA hydrolase subfamily.

It catalyses the reaction 1,4-dihydroxy-2-naphthoyl-CoA + H2O = 1,4-dihydroxy-2-naphthoate + CoA + H(+). It participates in cofactor biosynthesis; phylloquinone biosynthesis. It functions in the pathway quinol/quinone metabolism; 1,4-dihydroxy-2-naphthoate biosynthesis; 1,4-dihydroxy-2-naphthoate from chorismate: step 7/7. Catalyzes the hydrolysis of 1,4-dihydroxy-2-naphthoyl-CoA (DHNA-CoA) to 1,4-dihydroxy-2-naphthoate (DHNA), a reaction involved in phylloquinone (vitamin K1) biosynthesis. This Gloeothece citriformis (strain PCC 7424) (Cyanothece sp. (strain PCC 7424)) protein is 1,4-dihydroxy-2-naphthoyl-CoA hydrolase.